The sequence spans 95 residues: Aspartyl/glutamyl-tRNA(Asn/Gln) amidotransferase subunit C (95 aa).

This sequence belongs to the GatC family. Heterotrimer of A, B and C subunits.

The catalysed reaction is L-glutamyl-tRNA(Gln) + L-glutamine + ATP + H2O = L-glutaminyl-tRNA(Gln) + L-glutamate + ADP + phosphate + H(+). It catalyses the reaction L-aspartyl-tRNA(Asn) + L-glutamine + ATP + H2O = L-asparaginyl-tRNA(Asn) + L-glutamate + ADP + phosphate + 2 H(+). In terms of biological role, allows the formation of correctly charged Asn-tRNA(Asn) or Gln-tRNA(Gln) through the transamidation of misacylated Asp-tRNA(Asn) or Glu-tRNA(Gln) in organisms which lack either or both of asparaginyl-tRNA or glutaminyl-tRNA synthetases. The reaction takes place in the presence of glutamine and ATP through an activated phospho-Asp-tRNA(Asn) or phospho-Glu-tRNA(Gln). This chain is Aspartyl/glutamyl-tRNA(Asn/Gln) amidotransferase subunit C, found in Methylococcus capsulatus (strain ATCC 33009 / NCIMB 11132 / Bath).